The primary structure comprises 144 residues: Large ribosomal subunit protein uL15 (144 aa).

The segment at 1–57 (MQLNDLRSAPGARREKHRPGRGIGSGLGKTGGRGHKGLTSRSGGKVAPGFEGGQQPL) is disordered. Gly residues predominate over residues 21–31 (RGIGSGLGKTG).

The protein belongs to the universal ribosomal protein uL15 family. In terms of assembly, part of the 50S ribosomal subunit.

In terms of biological role, binds to the 23S rRNA. This is Large ribosomal subunit protein uL15 from Pseudomonas aeruginosa (strain LESB58).